We begin with the raw amino-acid sequence, 145 residues long: Granulysin (145 aa).

Positions 1–22 (MATWALLLLAAMLLGNPGLVFS) are cleaved as a signal peptide. The 81-residue stretch at 62–142 (LGRDYRTCLT…EDLRLCIPST (81 aa)) folds into the Saposin B-type domain. 2 disulfide bridges follow: cysteine 69/cysteine 132 and cysteine 96/cysteine 107.

Post-translationally, a 9 kDa form is produced by proteolytic processing of a 15 kDa protein. Expressed in natural killer and T-cells.

It is found in the secreted. Antimicrobial protein that kills intracellular pathogens. Active against a broad range of microbes, including Gram-positive and Gram-negative bacteria, fungi, and parasites. Kills Mycobacterium tuberculosis. The sequence is that of Granulysin (GNLY) from Homo sapiens (Human).